The chain runs to 109 residues: Hainantoxin-XVIII.2 (109 aa).

An N-terminal signal peptide occupies residues 1 to 18 (MKLSIIIIVTSLVIAVVA). A propeptide spanning residues 19 to 46 (FPSKDSKAIENDKTEQRMEIVVQETARA) is cleaved from the precursor. 4 disulfides stabilise this stretch: cysteine 47–cysteine 62, cysteine 55–cysteine 68, cysteine 59–cysteine 108, and cysteine 61–cysteine 81.

It belongs to the neurotoxin 25 family. F7 subfamily. Expressed by the venom gland.

The protein localises to the secreted. In terms of biological role, putative ion channel inhibitor. The sequence is that of Hainantoxin-XVIII.2 from Cyriopagopus hainanus (Chinese bird spider).